A 381-amino-acid polypeptide reads, in one-letter code: Cytochrome b (381 aa).

4 consecutive transmembrane segments (helical) span residues 33-53 (FGSLLGMCLIIQILTGLFLAM), 77-98 (WLLRNLHANGASMFFMCLFLHV), 113-133 (WNIGVILLLTVMATAFVGYVL), and 178-198 (FFAFHFILPFIIMALAVVHLL). Residues histidine 83 and histidine 97 each contribute to the heme b site. Positions 182 and 196 each coordinate heme b. A ubiquinone is bound at residue histidine 201. Transmembrane regions (helical) follow at residues 226 to 246 (IKDALGFMLLLLVLLLLALFS), 288 to 308 (LGGVLAVLASILILLIIPLLH), 320 to 340 (VSQTLFWILTANLITLTWIGG), and 347 to 367 (FIIIGQLAPMPYFLLILVMMP).

This sequence belongs to the cytochrome b family. As to quaternary structure, the cytochrome bc1 complex contains 11 subunits: 3 respiratory subunits (MT-CYB, CYC1 and UQCRFS1), 2 core proteins (UQCRC1 and UQCRC2) and 6 low-molecular weight proteins (UQCRH/QCR6, UQCRB/QCR7, UQCRQ/QCR8, UQCR10/QCR9, UQCR11/QCR10 and a cleavage product of UQCRFS1). This cytochrome bc1 complex then forms a dimer. Heme b serves as cofactor.

It localises to the mitochondrion inner membrane. Component of the ubiquinol-cytochrome c reductase complex (complex III or cytochrome b-c1 complex) that is part of the mitochondrial respiratory chain. The b-c1 complex mediates electron transfer from ubiquinol to cytochrome c. Contributes to the generation of a proton gradient across the mitochondrial membrane that is then used for ATP synthesis. The sequence is that of Cytochrome b (MT-CYB) from Dasyurus hallucatus (Northern quoll).